The following is a 487-amino-acid chain: 3-octaprenyl-4-hydroxybenzoate carboxy-lyase (487 aa).

N172 contacts Mn(2+). Prenylated FMN-binding positions include 175–177 (IYR), 189–191 (RWL), and 194–195 (RG). E238 contacts Mn(2+). D287 serves as the catalytic Proton donor.

Belongs to the UbiD family. Homohexamer. The cofactor is prenylated FMN. Requires Mn(2+) as cofactor.

The protein localises to the cell membrane. It catalyses the reaction a 4-hydroxy-3-(all-trans-polyprenyl)benzoate + H(+) = a 2-(all-trans-polyprenyl)phenol + CO2. The protein operates within cofactor biosynthesis; ubiquinone biosynthesis. In terms of biological role, catalyzes the decarboxylation of 3-octaprenyl-4-hydroxy benzoate to 2-octaprenylphenol, an intermediate step in ubiquinone biosynthesis. The protein is 3-octaprenyl-4-hydroxybenzoate carboxy-lyase of Thiobacillus denitrificans (strain ATCC 25259 / T1).